Reading from the N-terminus, the 424-residue chain is Homeobox even-skipped homolog protein 2 (424 aa).

Disordered stretches follow at residues 18–65 (PAGK…DTPT) and 132–178 (TTQL…GPDQ). 2 stretches are compositionally biased toward polar residues: residues 50 to 65 (RPTSASLHNTVGDTPT) and 132 to 145 (TTQLKENTNKVYSD). Positions 146–175 (NGSSTNTSSNGSNITNLNGNSSSIGNSGSG) are enriched in low complexity. Residues 179–238 (VRRYRTAFTREQIGRLEKEFYRENYVSRPRRCELAAALNLPETTIKVWFQNRRMKDKRQR) constitute a DNA-binding region (homeobox).

The protein belongs to the even-skipped homeobox family.

It is found in the nucleus. The sequence is that of Homeobox even-skipped homolog protein 2 (EVX2) from Heterodontus francisci (Horn shark).